Reading from the N-terminus, the 120-residue chain is Large ribosomal subunit protein uL14 (120 aa).

The protein belongs to the universal ribosomal protein uL14 family. Part of the 50S ribosomal subunit. Forms a cluster with proteins L3 and L19. In the 70S ribosome, L14 and L19 interact and together make contacts with the 16S rRNA in bridges B5 and B8.

Its function is as follows. Binds to 23S rRNA. Forms part of two intersubunit bridges in the 70S ribosome. The sequence is that of Large ribosomal subunit protein uL14 from Phytoplasma australiense.